A 365-amino-acid chain; its full sequence is Palmitoyltransferase ZDHHC20 (365 aa).

Over 1-14 the chain is Cytoplasmic; it reads MAPWTLWRCCQRVV. Residues 15–35 traverse the membrane as a helical segment; it reads GWVPVLFITFVVVWSYYAYVV. The Lumenal portion of the chain corresponds to 36 to 53; sequence ELCVFTIFGNEENGKTVV. A helical membrane pass occupies residues 54–74; sequence YLVAFHLFFVMFVWSYWMTIF. Residues 75–169 lie on the Cytoplasmic side of the membrane; it reads TSPASPSKEF…NNCVGFSNYK (95 aa). The region spanning 126–176 is the DHHC domain; it reads RYCEKCQLIKPDRAHHCSACDSCILKMDHHCPWVNNCVGFSNYKFFLLFLL. Positions 128 and 131 each coordinate Zn(2+). Residues Lys135 and 140-143 each bind substrate; that span reads HHCS. The Zn(2+) site is built by His141, Cys142, Cys145, Cys148, and His155. Cys156 (S-palmitoyl cysteine intermediate) is an active-site residue. Residue Cys162 participates in Zn(2+) binding. Residues 170 to 190 form a helical membrane-spanning segment; sequence FFLLFLLYSLLYCLFVAATVL. Residues 191–207 are Lumenal-facing; the sequence is EYFIKFWTNELTDTRAK. A helical transmembrane segment spans residues 208-231; it reads FHVLFLFFVSAMFFISVLSLFSYH. Residues 232-365 are Cytoplasmic-facing; the sequence is CWLVGKNRTT…NNHVTVAIEN (134 aa). A phosphoserine mark is found at Ser305, Ser330, and Ser339.

The protein belongs to the DHHC palmitoyltransferase family. In terms of processing, autopalmitoylated (in vitro).

It localises to the golgi apparatus membrane. Its subcellular location is the cell membrane. The protein resides in the cytoplasm. The protein localises to the perinuclear region. It is found in the endoplasmic reticulum membrane. It localises to the endoplasmic reticulum-Golgi intermediate compartment membrane. The catalysed reaction is L-cysteinyl-[protein] + hexadecanoyl-CoA = S-hexadecanoyl-L-cysteinyl-[protein] + CoA. It catalyses the reaction L-cysteinyl-[protein] + tetradecanoyl-CoA = S-tetradecanoyl-L-cysteinyl-[protein] + CoA. The enzyme catalyses L-cysteinyl-[protein] + octadecanoyl-CoA = S-octadecanoyl-L-cysteinyl-[protein] + CoA. In terms of biological role, palmitoyltransferase that could catalyze the addition of palmitate onto various protein substrates. Catalyzes palmitoylation of Cys residues in the cytoplasmic C-terminus of EGFR, and modulates the duration of EGFR signaling by modulating palmitoylation-dependent EGFR internalization and degradation. Has a preference for acyl-CoA with C16 fatty acid chains. Can also utilize acyl-CoA with C14 and C18 fatty acid chains. May palmitoylate CALHM1 subunit of gustatory voltage-gated ion channels and modulate channel gating and kinetics. (Microbial infection) Dominant palmitoyltransferase responsible for lipidation of SARS coronavirus-2/SARS-CoV-2 spike protein. Through a sequential action with ZDHHC9, rapidly and efficiently palmitoylates spike protein following its synthesis in the endoplasmic reticulum (ER). In the infected cell, promotes spike biogenesis by protecting it from premature ER degradation, increases half-life and controls the lipid organization of its immediate membrane environment. Once the virus has formed, spike palmitoylation controls fusion with the target cell. The protein is Palmitoyltransferase ZDHHC20 of Homo sapiens (Human).